The sequence spans 158 residues: Cyclic pyranopterin monophosphate synthase (158 aa).

Substrate is bound by residues 73–75 (LCH) and 110–111 (ME). The active site involves D125.

The protein belongs to the MoaC family. Homohexamer; trimer of dimers.

The enzyme catalyses (8S)-3',8-cyclo-7,8-dihydroguanosine 5'-triphosphate = cyclic pyranopterin phosphate + diphosphate. It participates in cofactor biosynthesis; molybdopterin biosynthesis. Its function is as follows. Catalyzes the conversion of (8S)-3',8-cyclo-7,8-dihydroguanosine 5'-triphosphate to cyclic pyranopterin monophosphate (cPMP). The sequence is that of Cyclic pyranopterin monophosphate synthase from Ectopseudomonas mendocina (strain ymp) (Pseudomonas mendocina).